A 479-amino-acid polypeptide reads, in one-letter code: MQNFEIIIGVENHVELKTNSKMFSPSKVSYGEVPNTLANEIDLAYPGTLPSVNKKAVELAVLACNALNMQIDTLLTFDRKNYFYPDLTKGFQITQQFNPIGRNGSLEIALENGNKKVIEIERLHIEEDTAKQVHKDNLTYLDYNRSGVGLIEIVTKPVLRNAEEACLYVEKLREILLFLNVSDVKMNEGSLRTDLNISLRPYGSDKFSNKVEIKNLNSISNIKKAVEFEINRQKEILLKNQIVEQQTRRYDDQTSSTILMRSKIDSIDYRYFREPNIFPIQLEKSWIKNVISNSPELADQKRIRYVNELGLTSEDANIILTSLEMTNFFEKTIKLTSNYNKVAKMLISEIQAKLNLENKTIDQIKLSPENLASVINLIDKNIISSKQTKVIMPIILDSNTETVEQIVERLNLKLITNKNEISKLLVNIINQNKELLEQYPTRPERVIKTIMGQLMKQTNGNVDPEIANQIVIKSIEQNL.

Belongs to the GatB/GatE family. GatB subfamily. Heterotrimer of A, B and C subunits.

The catalysed reaction is L-glutamyl-tRNA(Gln) + L-glutamine + ATP + H2O = L-glutaminyl-tRNA(Gln) + L-glutamate + ADP + phosphate + H(+). It carries out the reaction L-aspartyl-tRNA(Asn) + L-glutamine + ATP + H2O = L-asparaginyl-tRNA(Asn) + L-glutamate + ADP + phosphate + 2 H(+). Allows the formation of correctly charged Asn-tRNA(Asn) or Gln-tRNA(Gln) through the transamidation of misacylated Asp-tRNA(Asn) or Glu-tRNA(Gln) in organisms which lack either or both of asparaginyl-tRNA or glutaminyl-tRNA synthetases. The reaction takes place in the presence of glutamine and ATP through an activated phospho-Asp-tRNA(Asn) or phospho-Glu-tRNA(Gln). The chain is Aspartyl/glutamyl-tRNA(Asn/Gln) amidotransferase subunit B from Mycoplasma capricolum subsp. capricolum (strain California kid / ATCC 27343 / NCTC 10154).